The chain runs to 53 residues: Large ribosomal subunit protein eL40 (53 aa).

It belongs to the eukaryotic ribosomal protein eL40 family.

This chain is Large ribosomal subunit protein eL40, found in Staphylothermus marinus (strain ATCC 43588 / DSM 3639 / JCM 9404 / F1).